The primary structure comprises 479 residues: Phosphatidylinositol 4-kinase type 2-alpha (479 aa).

M1 carries the post-translational modification N-acetylmethionine. Residues M1–T74 are disordered. Residues S5, S9, S44, S47, and S51 each carry the phosphoserine modification. Over residues V31–G45 the composition is skewed to low complexity. The segment covering G53 to R66 has biased composition (basic and acidic residues). Positions C124–T453 constitute a PI3K/PI4K catalytic domain. A G-loop region spans residues I130 to G136. Residues Y131 to S137 and K152 each bind ATP. Residues E157–Y159 are important for substrate binding. Residues K165–C178 are important for interaction with membranes. 4 S-palmitoyl cysteine lipidation sites follow: C174, C175, C177, and C178. Position 261-264 (Q261–V264) interacts with ATP. The segment at K268–R276 is important for interaction with membranes. The tract at residues R305 to N313 is catalytic loop. Residues A344–F364 form an activation loop region. D346 provides a ligand contact to ATP. The interval W359–W368 is important for interaction with membranes. S462 carries the post-translational modification Phosphoserine.

The protein belongs to the PI3/PI4-kinase family. Type II PI4K subfamily. In terms of assembly, associates with the BLOC-1 and the AP-3 complexes; the BLOC-1 complex is required for optimal binding of PI4K2A to the AP-3 complex. Interacts with BLOC1S5 and DTNBP1. Interacts with FOS; this interaction may enhance phosphatidylinositol phosphorylation activity. Interacts with ITCH. Interacts with ATG9A. Post-translationally, palmitoylated by ZDHHC3 and ZDHHC7 in the CCPCC motif. Palmitoylation is cholesterol-dependent, and required for TGN localization. Ubiquitinated by ITCH; this does not lead to proteasomal degradation. Widely expressed. Highest expression is observed in kidney, brain, heart, skeletal muscle, and placenta and lowest expression is observed in colon, thymus, and small intestine.

It localises to the golgi apparatus. Its subcellular location is the trans-Golgi network membrane. The protein resides in the membrane raft. It is found in the cell projection. The protein localises to the dendrite. It localises to the presynaptic cell membrane. Its subcellular location is the synapse. The protein resides in the synaptosome. It is found in the mitochondrion. The protein localises to the endosome. It localises to the endosome membrane. Its subcellular location is the cytoplasmic vesicle. The protein resides in the membrane. It is found in the cell membrane. The protein localises to the perikaryon. It localises to the neuron projection. The catalysed reaction is a 1,2-diacyl-sn-glycero-3-phospho-(1D-myo-inositol) + ATP = a 1,2-diacyl-sn-glycero-3-phospho-(1D-myo-inositol 4-phosphate) + ADP + H(+). Its function is as follows. Membrane-bound phosphatidylinositol-4 kinase (PI4-kinase) that catalyzes the phosphorylation of phosphatidylinositol (PI) to phosphatidylinositol 4-phosphate (PI4P), a lipid that plays important roles in endocytosis, Golgi function, protein sorting and membrane trafficking and is required for prolonged survival of neurons. Besides, phosphorylation of phosphatidylinositol (PI) to phosphatidylinositol 4-phosphate (PI4P) is the first committed step in the generation of phosphatidylinositol 4,5-bisphosphate (PIP2), a precursor of the second messenger inositol 1,4,5-trisphosphate (InsP3). The polypeptide is Phosphatidylinositol 4-kinase type 2-alpha (PI4K2A) (Homo sapiens (Human)).